The primary structure comprises 459 residues: MALTPIPSTFTSLFNFSDHSPYPSPSLHYLLPGSSPSFSLQLSALSRTPIYFEALKVLSRSKCFAKSPTTAEDFVGDYESLNVSDDDDGSDSNSSDGDNGGGRDDSKKIDSSSSSSSSDSTSLGIREPVYEVVEVKATGAISTRKINRRQLLKSSGLRPRDIRSVDPSLFMTNSVPSLLVREHAILLNLGSLRAIAMRDRVLIFDYNRRGGRAFVDTLMPRLNPRSMNGGPSMPFELEAVESALISRIQRLEQRLMDIEPRVQALLEVLPNRLTADILEELRISKQRLVELGSRAGALRQMLLDLLEDPHEIRRICIMGRNCTLRRGDDDLECTLPSDKLIAEEEEEEIEMLLENYLQRCESCHGQAERLLDSAKEMEDSIAVNLSSRRLEVSRFELLLQVGTFCVAVGALIAGIFGMNLRSYLEEQASAFWLTTGGIIIGAAVAFFLMYSYLSRRKIF.

A chloroplast-targeting transit peptide spans 1–62; that stretch reads MALTPIPSTF…EALKVLSRSK (62 aa). Residues 76 to 122 form a disordered region; it reads GDYESLNVSDDDDGSDSNSSDGDNGGGRDDSKKIDSSSSSSSSDSTS. Residues 101-110 show a composition bias toward basic and acidic residues; the sequence is GGRDDSKKID. A compositionally biased stretch (low complexity) spans 111-122; it reads SSSSSSSSDSTS. A run of 2 helical transmembrane segments spans residues 397–417 and 430–450; these read LLLQVGTFCVAVGALIAGIFG and AFWLTTGGIIIGAAVAFFLMY. The Required for magnesium transport activity motif lies at 417–419; that stretch reads GMN.

This sequence belongs to the CorA metal ion transporter (MIT) (TC 1.A.35.5) family. In terms of tissue distribution, expressed in the green part of the plant. Preferentially expressed in the spongy mesophyll cells and stomata of young leaves but also detected in cotyledons and at the base of the leaf petioles.

It is found in the plastid. It localises to the chloroplast membrane. Its function is as follows. High-affinity magnesium transporter that mediates the influx of magnesium in chloroplast. This is Magnesium transporter MRS2-11, chloroplastic (MRS2-11) from Arabidopsis thaliana (Mouse-ear cress).